We begin with the raw amino-acid sequence, 398 residues long: S-adenosylmethionine synthase (398 aa).

Positions 1 to 21 (MAANRRLFTSESVTEGHPDKM) are disordered. H17 provides a ligand contact to ATP. D19 contacts Mg(2+). Position 45 (E45) interacts with K(+). Residues E58 and Q101 each contribute to the L-methionine site. The interval 101–111 (QSADIAGGVNQ) is flexible loop. ATP is bound by residues 177–179 (DGK), 244–245 (RF), D253, 259–260 (RK), A276, and K280. D253 is a binding site for L-methionine. K284 provides a ligand contact to L-methionine.

Belongs to the AdoMet synthase family. In terms of assembly, homotetramer; dimer of dimers. Mg(2+) is required as a cofactor. It depends on K(+) as a cofactor.

The protein resides in the cytoplasm. The enzyme catalyses L-methionine + ATP + H2O = S-adenosyl-L-methionine + phosphate + diphosphate. The protein operates within amino-acid biosynthesis; S-adenosyl-L-methionine biosynthesis; S-adenosyl-L-methionine from L-methionine: step 1/1. Its function is as follows. Catalyzes the formation of S-adenosylmethionine (AdoMet) from methionine and ATP. The overall synthetic reaction is composed of two sequential steps, AdoMet formation and the subsequent tripolyphosphate hydrolysis which occurs prior to release of AdoMet from the enzyme. In Oceanobacillus iheyensis (strain DSM 14371 / CIP 107618 / JCM 11309 / KCTC 3954 / HTE831), this protein is S-adenosylmethionine synthase.